A 60-amino-acid polypeptide reads, in one-letter code: Metallothionein A (60 aa).

The segment at 1 to 28 (MDPCQCSKSGTCNCGGSCTCTNCSCKSC) is beta. 20 residues coordinate a divalent metal cation: cysteine 4, cysteine 6, cysteine 12, cysteine 14, cysteine 18, cysteine 20, cysteine 23, cysteine 25, cysteine 28, cysteine 32, cysteine 33, cysteine 35, cysteine 36, cysteine 40, cysteine 43, cysteine 47, cysteine 49, cysteine 54, cysteine 58, and cysteine 59. Residues 29-60 (KKSCCPCCPSGCTKCASGCVCKGKTCDTSCCQ) are alpha.

It belongs to the metallothionein superfamily. Type 1 family.

Metallothioneins have a high content of cysteine residues that bind various heavy metals. This is Metallothionein A (mta) from Trematomus bernacchii (Emerald rockcod).